The sequence spans 198 residues: Holliday junction branch migration complex subunit RuvA (198 aa).

The tract at residues 1–63 (MYSYIIGVIT…EDASILYGFS (63 aa)) is domain I. The tract at residues 64-142 (SQKERELFNL…KDFVPSEKPV (79 aa)) is domain II. The interval 143-153 (NKEVKRSNDSE) is flexible linker. The interval 153 to 198 (EFAREALLQLGYFKNDVDAFIENTDISGLSIEDIMKKAMKSLDSSR) is domain III.

The protein belongs to the RuvA family. In terms of assembly, homotetramer. Forms an RuvA(8)-RuvB(12)-Holliday junction (HJ) complex. HJ DNA is sandwiched between 2 RuvA tetramers; dsDNA enters through RuvA and exits via RuvB. An RuvB hexamer assembles on each DNA strand where it exits the tetramer. Each RuvB hexamer is contacted by two RuvA subunits (via domain III) on 2 adjacent RuvB subunits; this complex drives branch migration. In the full resolvosome a probable DNA-RuvA(4)-RuvB(12)-RuvC(2) complex forms which resolves the HJ.

The protein localises to the cytoplasm. Its function is as follows. The RuvA-RuvB-RuvC complex processes Holliday junction (HJ) DNA during genetic recombination and DNA repair, while the RuvA-RuvB complex plays an important role in the rescue of blocked DNA replication forks via replication fork reversal (RFR). RuvA specifically binds to HJ cruciform DNA, conferring on it an open structure. The RuvB hexamer acts as an ATP-dependent pump, pulling dsDNA into and through the RuvAB complex. HJ branch migration allows RuvC to scan DNA until it finds its consensus sequence, where it cleaves and resolves the cruciform DNA. This chain is Holliday junction branch migration complex subunit RuvA, found in Finegoldia magna (strain ATCC 29328 / DSM 20472 / WAL 2508) (Peptostreptococcus magnus).